The following is a 544-amino-acid chain: Chaperonin GroEL 2 (544 aa).

ATP-binding positions include 29 to 32 (TLGP), 86 to 90 (DGTTT), glycine 413, 479 to 481 (NAA), and aspartate 495.

This sequence belongs to the chaperonin (HSP60) family. Forms a cylinder of 14 subunits composed of two heptameric rings stacked back-to-back. Interacts with the co-chaperonin GroES.

It localises to the cytoplasm. The catalysed reaction is ATP + H2O + a folded polypeptide = ADP + phosphate + an unfolded polypeptide.. Its function is as follows. Together with its co-chaperonin GroES, plays an essential role in assisting protein folding. The GroEL-GroES system forms a nano-cage that allows encapsulation of the non-native substrate proteins and provides a physical environment optimized to promote and accelerate protein folding. This Synechococcus sp. (strain CC9605) protein is Chaperonin GroEL 2.